Here is a 510-residue protein sequence, read N- to C-terminus: 2-isopropylmalate synthase (510 aa).

Residues 5–267 (LIIFDTTLRD…DTRIDSVHIV (263 aa)) form the Pyruvate carboxyltransferase domain. 4 residues coordinate Mn(2+): Asp-14, His-202, His-204, and Asn-238. The segment at 392–510 (KLLSLTAHSE…SKLERAHPQV (119 aa)) is regulatory domain.

It belongs to the alpha-IPM synthase/homocitrate synthase family. LeuA type 1 subfamily. As to quaternary structure, homodimer. Requires Mn(2+) as cofactor.

Its subcellular location is the cytoplasm. The enzyme catalyses 3-methyl-2-oxobutanoate + acetyl-CoA + H2O = (2S)-2-isopropylmalate + CoA + H(+). It functions in the pathway amino-acid biosynthesis; L-leucine biosynthesis; L-leucine from 3-methyl-2-oxobutanoate: step 1/4. Functionally, catalyzes the condensation of the acetyl group of acetyl-CoA with 3-methyl-2-oxobutanoate (2-ketoisovalerate) to form 3-carboxy-3-hydroxy-4-methylpentanoate (2-isopropylmalate). The chain is 2-isopropylmalate synthase from Nitrosospira multiformis (strain ATCC 25196 / NCIMB 11849 / C 71).